Here is a 309-residue protein sequence, read N- to C-terminus: Coproporphyrin III ferrochelatase (309 aa).

Fe-coproporphyrin III contacts are provided by residues tyrosine 12, arginine 29, 45 to 46, serine 53, and tyrosine 124; that span reads RY. Fe(2+)-binding residues include histidine 182 and glutamate 263.

Belongs to the ferrochelatase family.

It is found in the cytoplasm. It carries out the reaction Fe-coproporphyrin III + 2 H(+) = coproporphyrin III + Fe(2+). Its pathway is porphyrin-containing compound metabolism; protoheme biosynthesis. Functionally, involved in coproporphyrin-dependent heme b biosynthesis. Catalyzes the insertion of ferrous iron into coproporphyrin III to form Fe-coproporphyrin III. This is Coproporphyrin III ferrochelatase from Listeria monocytogenes serotype 4b (strain F2365).